A 94-amino-acid chain; its full sequence is Integration host factor subunit beta (94 aa).

The protein belongs to the bacterial histone-like protein family. Heterodimer of an alpha and a beta chain.

This protein is one of the two subunits of integration host factor, a specific DNA-binding protein that functions in genetic recombination as well as in transcriptional and translational control. The chain is Integration host factor subunit beta (ihfB) from Dickeya dadantii (strain 3937) (Erwinia chrysanthemi (strain 3937)).